The primary structure comprises 423 residues: D-tagatose-1,6-bisphosphate aldolase subunit GatZ (423 aa).

The protein belongs to the GatZ/KbaZ family. GatZ subfamily. As to quaternary structure, forms a complex with GatY.

The protein operates within carbohydrate metabolism; D-tagatose 6-phosphate degradation; D-glyceraldehyde 3-phosphate and glycerone phosphate from D-tagatose 6-phosphate: step 2/2. Its function is as follows. Component of the tagatose-1,6-bisphosphate aldolase GatYZ that is required for full activity and stability of the Y subunit. Could have a chaperone-like function for the proper and stable folding of GatY. When expressed alone, GatZ does not show any aldolase activity. Is involved in the catabolism of galactitol. This is D-tagatose-1,6-bisphosphate aldolase subunit GatZ from Salmonella heidelberg (strain SL476).